Here is a 180-residue protein sequence, read N- to C-terminus: Protein GrpE (180 aa).

A compositionally biased stretch (basic and acidic residues) spans 1–19; sequence MAEKKRAQEQEKVQEDQKM. The segment at 1–25 is disordered; sequence MAEKKRAQEQEKVQEDQKMQNEQNE.

The protein belongs to the GrpE family. Homodimer.

It is found in the cytoplasm. In terms of biological role, participates actively in the response to hyperosmotic and heat shock by preventing the aggregation of stress-denatured proteins, in association with DnaK and GrpE. It is the nucleotide exchange factor for DnaK and may function as a thermosensor. Unfolded proteins bind initially to DnaJ; upon interaction with the DnaJ-bound protein, DnaK hydrolyzes its bound ATP, resulting in the formation of a stable complex. GrpE releases ADP from DnaK; ATP binding to DnaK triggers the release of the substrate protein, thus completing the reaction cycle. Several rounds of ATP-dependent interactions between DnaJ, DnaK and GrpE are required for fully efficient folding. The polypeptide is Protein GrpE (Nitratiruptor sp. (strain SB155-2)).